Consider the following 308-residue polypeptide: Ribonuclease HIII (308 aa).

The region spanning 88-304 (FHCIGSDEAG…RDKAIHLMNQ (217 aa)) is the RNase H type-2 domain. A divalent metal cation is bound by residues D94, E95, and D199.

Belongs to the RNase HII family. RnhC subfamily. Mn(2+) is required as a cofactor. It depends on Mg(2+) as a cofactor.

The protein localises to the cytoplasm. It carries out the reaction Endonucleolytic cleavage to 5'-phosphomonoester.. Endonuclease that specifically degrades the RNA of RNA-DNA hybrids. The protein is Ribonuclease HIII of Staphylococcus epidermidis (strain ATCC 12228 / FDA PCI 1200).